The primary structure comprises 396 residues: Probable sugar efflux transporter (396 aa).

The next 12 membrane-spanning stretches (helical) occupy residues 15–35 (VVTLAVAAFIFNTTEFVPVGL), 50–70 (VGIMLTIYAWVVALMSLPFML), 81–101 (LICLFVVFIASHVLSFLSWSF), 103–123 (VLVISRIGVAFAHAIFWSITA), 136–156 (AQALSLIATGTALAMVLGLPL), 170–190 (FFAIGIGALITLLCLIKLLPL), 209–229 (PALMSIYLLTVVVVTAHYTAY), 246–266 (FATALLLLLGGAGIIGSVIFG), 275–295 (ALVSTAIALLLVCLALLLPAA), 299–319 (IHLGVLSIFWGIAMMIIGLGM), 333–353 (VAMALFSGIFNIGIGAGALVG), and 364–384 (MIGYVGTVPAFAALIWSIIIF).

This sequence belongs to the major facilitator superfamily. SotB (TC 2.A.1.2) family.

It is found in the cell inner membrane. Its function is as follows. Involved in the efflux of sugars. The physiological role may be the reduction of the intracellular concentration of toxic sugars or sugar metabolites. The polypeptide is Probable sugar efflux transporter (Escherichia coli O157:H7 (strain EC4115 / EHEC)).